Consider the following 876-residue polypeptide: MSKSTAEIRQAFLDFFHSKGHQVVASSSLVPHNDPTLLFTNAGMNQFKDVFLGLDKRNYSRATTSQRCVRAGGKHNDLENVGYTARHHTFFEMLGNFSFGDYFKHDAIQFAWELLTSEKWFALPKERLWVTVYESDDEAYEIWEKEVGIPRERIIRIGDNKGAPYASDNFWQMGDTGPCGPCTEIFYDHGDHIWGGPPGSPEEDGDRYIEIWNIVFMQFNRQADGTMEPLPKPSVDTGMGLERIAAVLQHVNSNYDIDLFRTLIQAVAKVTGATDLSNKSLRVIADHIRSCAFLIADGVMPSNENRGYVLRRIIRRAVRHGNMLGAKETFFYKLVGPLIDVMGSAGEDLKRQQAQVEQVLKTEEEQFARTLERGLALLDEELAKLSGDTLDGETAFRLYDTYGFPVDLTADVCRERNIKVDEAGFEAAMEEQRRRAREASGFGADYNAMIRVDSASEFKGYDHLELNGKVTALFVDGKAVDAINAGQEAVVVLDQTPFYAESGGQVGDKGELKGANFSFAVEDTQKYGQAIGHIGKLAAGSLKVGDAVQADVDEARRARIRLNHSATHLMHAALRQVLGTHVSQKGSLVNDKVLRFDFSHNEAMKPEEIRAVEDLVNAQIRRNLPIETNIMDLEAAKAKGAMALFGEKYDERVRVLSMGDFSTELCGGTHASRTGDIGLFRIISESGTAAGVRRIEAVTGEGAITTVHADSDRLSEVAHLLKGDSNNLADKVRSVLERTRQLEKELQQLKEQAAAQESANLSSKAIDVNGVKLLVSELSGVEPKMLRTMVDDLKNQLGSTIIVLATVAEGKVSLIAGVSKDVTDRVKAGELIGMVAQQVGGKGGGRPDMAQAGGTDAAALPAALASVKGWVSAKLQ.

Lys74 carries the N6-acetyllysine modification. Zn(2+) is bound by residues His564, His568, Cys666, and His670.

It belongs to the class-II aminoacyl-tRNA synthetase family. As to quaternary structure, homotetramer. Requires Zn(2+) as cofactor.

The protein resides in the cytoplasm. It catalyses the reaction tRNA(Ala) + L-alanine + ATP = L-alanyl-tRNA(Ala) + AMP + diphosphate. Its function is as follows. Catalyzes the attachment of alanine to tRNA(Ala) in a two-step reaction: alanine is first activated by ATP to form Ala-AMP and then transferred to the acceptor end of tRNA(Ala). Also edits incorrectly charged Ser-tRNA(Ala) and Gly-tRNA(Ala) via its editing domain. In Shigella sonnei (strain Ss046), this protein is Alanine--tRNA ligase.